Consider the following 295-residue polypeptide: Protease HtpX (295 aa).

The next 2 helical transmembrane spans lie at 4–24 and 42–62; these read ILLF…TLSL and QLLV…LFIS. H147 is a Zn(2+) binding site. E148 is an active-site residue. H151 lines the Zn(2+) pocket. 2 helical membrane-spanning segments follow: residues 158-178 and 199-219; these read VTLA…ARII and ITTI…VMWF. Zn(2+) is bound at residue E224.

The protein belongs to the peptidase M48B family. Zn(2+) serves as cofactor.

The protein resides in the cell inner membrane. The polypeptide is Protease HtpX (Pseudomonas syringae pv. tomato (strain ATCC BAA-871 / DC3000)).